Reading from the N-terminus, the 174-residue chain is Putative NADH dehydrogenase/NAD(P)H nitroreductase AF_2267 (174 aa).

107–112 (AARCLG) serves as a coordination point for NAD(+).

Belongs to the nitroreductase family. It depends on FMN as a cofactor.

The protein is Putative NADH dehydrogenase/NAD(P)H nitroreductase AF_2267 of Archaeoglobus fulgidus (strain ATCC 49558 / DSM 4304 / JCM 9628 / NBRC 100126 / VC-16).